Reading from the N-terminus, the 144-residue chain is Signal recognition particle 19 kDa protein (144 aa).

A disordered region spans residues 117–144 (TRTQKTGGGDQSLQQGEGSKKGKGKKKK).

This sequence belongs to the SRP19 family. In terms of assembly, component of a signal recognition particle complex that consists of a 7SL RNA molecule of 300 nucleotides and six protein subunits: SRP72, SRP68, SRP54, SRP19, SRP14 and SRP9. Interacts with IPO5, IPO7, IPO8, KPNB1 and TNPO1. Interactions with IPO8 and TNPO1 may be involved in SRP19 import into the nucleus.

The protein resides in the cytoplasm. The protein localises to the nucleus. It is found in the nucleolus. It localises to the nucleoplasm. Its function is as follows. Component of the signal recognition particle (SRP) complex, a ribonucleoprotein complex that mediates the cotranslational targeting of secretory and membrane proteins to the endoplasmic reticulum (ER). Binds directly to 7SL RNA. Mediates binding of SRP54 to the SRP complex. In Canis lupus familiaris (Dog), this protein is Signal recognition particle 19 kDa protein.